The primary structure comprises 71 residues: Large ribosomal subunit protein uL29 (71 aa).

This sequence belongs to the universal ribosomal protein uL29 family.

This Rickettsia canadensis (strain McKiel) protein is Large ribosomal subunit protein uL29.